The chain runs to 572 residues: Proline--tRNA ligase (572 aa).

It belongs to the class-II aminoacyl-tRNA synthetase family. ProS type 1 subfamily. In terms of assembly, homodimer.

The protein resides in the cytoplasm. It catalyses the reaction tRNA(Pro) + L-proline + ATP = L-prolyl-tRNA(Pro) + AMP + diphosphate. Catalyzes the attachment of proline to tRNA(Pro) in a two-step reaction: proline is first activated by ATP to form Pro-AMP and then transferred to the acceptor end of tRNA(Pro). As ProRS can inadvertently accommodate and process non-cognate amino acids such as alanine and cysteine, to avoid such errors it has two additional distinct editing activities against alanine. One activity is designated as 'pretransfer' editing and involves the tRNA(Pro)-independent hydrolysis of activated Ala-AMP. The other activity is designated 'posttransfer' editing and involves deacylation of mischarged Ala-tRNA(Pro). The misacylated Cys-tRNA(Pro) is not edited by ProRS. This Salmonella arizonae (strain ATCC BAA-731 / CDC346-86 / RSK2980) protein is Proline--tRNA ligase.